Reading from the N-terminus, the 624-residue chain is Phosphomethylpyrimidine synthase (624 aa).

Substrate-binding positions include asparagine 231, methionine 260, tyrosine 289, histidine 325, 345–347 (SRG), 386–389 (DGLR), and glutamate 425. Histidine 429 provides a ligand contact to Zn(2+). Substrate is bound at residue tyrosine 452. Residue histidine 493 coordinates Zn(2+). Positions 573, 576, and 581 each coordinate [4Fe-4S] cluster.

This sequence belongs to the ThiC family. In terms of assembly, homodimer. Requires [4Fe-4S] cluster as cofactor.

The enzyme catalyses 5-amino-1-(5-phospho-beta-D-ribosyl)imidazole + S-adenosyl-L-methionine = 4-amino-2-methyl-5-(phosphooxymethyl)pyrimidine + CO + 5'-deoxyadenosine + formate + L-methionine + 3 H(+). Its pathway is cofactor biosynthesis; thiamine diphosphate biosynthesis. In terms of biological role, catalyzes the synthesis of the hydroxymethylpyrimidine phosphate (HMP-P) moiety of thiamine from aminoimidazole ribotide (AIR) in a radical S-adenosyl-L-methionine (SAM)-dependent reaction. The chain is Phosphomethylpyrimidine synthase from Myxococcus xanthus (strain DK1622).